Here is a 449-residue protein sequence, read N- to C-terminus: Asparagine--tRNA ligase (449 aa).

Belongs to the class-II aminoacyl-tRNA synthetase family. Homodimer.

It localises to the cytoplasm. It catalyses the reaction tRNA(Asn) + L-asparagine + ATP = L-asparaginyl-tRNA(Asn) + AMP + diphosphate + H(+). This Desulfotalea psychrophila (strain LSv54 / DSM 12343) protein is Asparagine--tRNA ligase.